Consider the following 224-residue polypeptide: Probable octanoyltransferase (224 aa).

One can recognise a BPL/LPL catalytic domain in the interval 28-199 (GLTGDIALVT…KLALELGLTP (172 aa)). Substrate is bound by residues 66–73 (RGGDATYH), 130–132 (SIG), and 143–145 (GVA). Cys161 (acyl-thioester intermediate) is an active-site residue.

This sequence belongs to the LipB family.

The protein localises to the cytoplasm. The enzyme catalyses octanoyl-[ACP] + L-lysyl-[protein] = N(6)-octanoyl-L-lysyl-[protein] + holo-[ACP] + H(+). It participates in protein modification; protein lipoylation via endogenous pathway; protein N(6)-(lipoyl)lysine from octanoyl-[acyl-carrier-protein]: step 1/2. In terms of biological role, catalyzes the transfer of endogenously produced octanoic acid from octanoyl-acyl-carrier-protein onto the lipoyl domains of lipoate-dependent enzymes. Lipoyl-ACP can also act as a substrate although octanoyl-ACP is likely to be the physiological substrate. This Pyrobaculum aerophilum (strain ATCC 51768 / DSM 7523 / JCM 9630 / CIP 104966 / NBRC 100827 / IM2) protein is Probable octanoyltransferase.